The following is a 432-amino-acid chain: Putative cyclin-F1-4 (432 aa).

Belongs to the cyclin family. Cyclin F subfamily.

This chain is Putative cyclin-F1-4 (CycF1-4), found in Oryza sativa subsp. japonica (Rice).